A 447-amino-acid polypeptide reads, in one-letter code: MTTILKHLPVGQRIGIAFSGGLDTSAALLWMRQKGAVPYAYTANLGQPDEEDYDAIPRRAMEYGAENARLIDCRKQLVAEGIAAIQCGAFHNTTGGLTYFNTTPLGRAVTGTMLVAAMKEDGVNIWGDGSTYKGNDIERFYRYGLLTNAELQIYKPWLDTDFIDELGGRHEMSEFMTACGFDYKMSVEKAYSTDSNMLGATHEAKDLEYLNSSVKIVNPIMGVKFWDESVKIPAEEVTVRFEQGHPVALNGKTFSDDVEMMLEANRIGGRHGLGMSDQIENRIIEAKSRGIYEAPGMALLHIAYERLLTGIHNEDTIEQYHAHGRQLGRLLYQGRWFDSQALMLRDSLQRWVASQITGEVTLELRRGNDYSILNTISNNLTYKPERLTMEKGDSVFSPDDRIGQLTMRNLDITDTREKLFGYAKTGLLSSSAASGVPQVENLENKAK.

Residues Ala-17–Ser-25 and Ala-43 contribute to the ATP site. Tyr-99 contacts L-citrulline. Positions 129 and 131 each coordinate ATP. Positions 131, 135, and 136 each coordinate L-aspartate. Asn-135 contacts L-citrulline. An ATP-binding site is contributed by Asp-136. 2 residues coordinate L-citrulline: Arg-139 and Ser-192. Asp-194 provides a ligand contact to ATP. Thr-201, Glu-203, and Glu-280 together coordinate L-citrulline.

Belongs to the argininosuccinate synthase family. Type 2 subfamily. Homotetramer.

It localises to the cytoplasm. The catalysed reaction is L-citrulline + L-aspartate + ATP = 2-(N(omega)-L-arginino)succinate + AMP + diphosphate + H(+). The protein operates within amino-acid biosynthesis; L-arginine biosynthesis; L-arginine from L-ornithine and carbamoyl phosphate: step 2/3. The protein is Argininosuccinate synthase of Escherichia fergusonii (strain ATCC 35469 / DSM 13698 / CCUG 18766 / IAM 14443 / JCM 21226 / LMG 7866 / NBRC 102419 / NCTC 12128 / CDC 0568-73).